A 357-amino-acid polypeptide reads, in one-letter code: Uroporphyrinogen decarboxylase (357 aa).

Substrate is bound by residues 27-31 (RQAGR), aspartate 77, tyrosine 154, threonine 209, and histidine 327.

The protein belongs to the uroporphyrinogen decarboxylase family. Homodimer.

It is found in the cytoplasm. The enzyme catalyses uroporphyrinogen III + 4 H(+) = coproporphyrinogen III + 4 CO2. Its pathway is porphyrin-containing compound metabolism; protoporphyrin-IX biosynthesis; coproporphyrinogen-III from 5-aminolevulinate: step 4/4. Functionally, catalyzes the decarboxylation of four acetate groups of uroporphyrinogen-III to yield coproporphyrinogen-III. The protein is Uroporphyrinogen decarboxylase of Nitrosococcus oceani (strain ATCC 19707 / BCRC 17464 / JCM 30415 / NCIMB 11848 / C-107).